Consider the following 258-residue polypeptide: Transcription initiation factor TFIID subunit 9B (258 aa).

Met1 is subject to N-acetylmethionine. Ser147 carries the post-translational modification Phosphoserine. Thr159 and Thr174 each carry phosphothreonine. Ser177 bears the Phosphoserine mark. Polar residues predominate over residues 227–236 (SSQSTATDSN). A disordered region spans residues 227–258 (SSQSTATDSNPLKRKHDDDDDDDDDDDDNDTM). The span at 244 to 258 (DDDDDDDDDDDNDTM) shows a compositional bias: acidic residues.

This sequence belongs to the TAF9 family. As to quaternary structure, binds TAF5 and TAF6. Component of TFIID and the TATA-binding protein-free TAF complex (TFTC). TFIID is composed of TATA binding protein (TBP) and a number of TBP-associated factors (TAFs). Binds N-terminal domain of p53/TP53 which is essential for transcription.

It is found in the nucleus. Functionally, essential for cell viability. TAF9 and TAF9L are involved in transcriptional activation as well as repression of distinct but overlapping sets of genes. May have a role in gene regulation associated with apoptosis. TAFs are components of the transcription factor IID (TFIID) complex, the TBP-free TAFII complex (TFTC), the PCAF histone acetylase complex and the STAGA transcription coactivator-HAT complex. TFIID or TFTC are essential for the regulation of RNA polymerase II-mediated transcription. In Rattus norvegicus (Rat), this protein is Transcription initiation factor TFIID subunit 9B (Taf9b).